Consider the following 366-residue polypeptide: tRNA/tmRNA (uracil-C(5))-methyltransferase (366 aa).

Residues Gln190, Tyr218, Asn223, Glu239, and Asp299 each coordinate S-adenosyl-L-methionine. Residue Cys324 is the Nucleophile of the active site. Catalysis depends on Glu358, which acts as the Proton acceptor.

This sequence belongs to the class I-like SAM-binding methyltransferase superfamily. RNA M5U methyltransferase family. TrmA subfamily.

It catalyses the reaction uridine(54) in tRNA + S-adenosyl-L-methionine = 5-methyluridine(54) in tRNA + S-adenosyl-L-homocysteine + H(+). The catalysed reaction is uridine(341) in tmRNA + S-adenosyl-L-methionine = 5-methyluridine(341) in tmRNA + S-adenosyl-L-homocysteine + H(+). In terms of biological role, dual-specificity methyltransferase that catalyzes the formation of 5-methyluridine at position 54 (m5U54) in all tRNAs, and that of position 341 (m5U341) in tmRNA (transfer-mRNA). In Salmonella paratyphi B (strain ATCC BAA-1250 / SPB7), this protein is tRNA/tmRNA (uracil-C(5))-methyltransferase.